Here is a 357-residue protein sequence, read N- to C-terminus: S-adenosylmethionine:tRNA ribosyltransferase-isomerase (357 aa).

This sequence belongs to the QueA family. Monomer.

The protein localises to the cytoplasm. The catalysed reaction is 7-aminomethyl-7-carbaguanosine(34) in tRNA + S-adenosyl-L-methionine = epoxyqueuosine(34) in tRNA + adenine + L-methionine + 2 H(+). Its pathway is tRNA modification; tRNA-queuosine biosynthesis. In terms of biological role, transfers and isomerizes the ribose moiety from AdoMet to the 7-aminomethyl group of 7-deazaguanine (preQ1-tRNA) to give epoxyqueuosine (oQ-tRNA). The protein is S-adenosylmethionine:tRNA ribosyltransferase-isomerase of Edwardsiella ictaluri (strain 93-146).